The primary structure comprises 157 residues: S-ribosylhomocysteine lyase (157 aa).

Positions 54, 58, and 126 each coordinate Fe cation.

The protein belongs to the LuxS family. As to quaternary structure, homodimer. Requires Fe cation as cofactor.

It carries out the reaction S-(5-deoxy-D-ribos-5-yl)-L-homocysteine = (S)-4,5-dihydroxypentane-2,3-dione + L-homocysteine. In terms of biological role, involved in the synthesis of autoinducer 2 (AI-2) which is secreted by bacteria and is used to communicate both the cell density and the metabolic potential of the environment. The regulation of gene expression in response to changes in cell density is called quorum sensing. Catalyzes the transformation of S-ribosylhomocysteine (RHC) to homocysteine (HC) and 4,5-dihydroxy-2,3-pentadione (DPD). This Bacillus cereus (strain G9842) protein is S-ribosylhomocysteine lyase.